Here is a 179-residue protein sequence, read N- to C-terminus: Ubiquitin-conjugating enzyme E2 2 (179 aa).

The interval methionine 1–proline 28 is disordered. The UBC core domain occupies proline 4 to asparagine 150. Cysteine 88 functions as the Glycyl thioester intermediate in the catalytic mechanism. The disordered stretch occupies residues valine 145 to aspartate 179. Acidic residues predominate over residues tryptophan 149–aspartate 179. Positions aspartate 151–aspartate 179 are acidic tail.

Belongs to the ubiquitin-conjugating enzyme family.

Its subcellular location is the cytoplasm. The protein resides in the nucleus. The catalysed reaction is S-ubiquitinyl-[E1 ubiquitin-activating enzyme]-L-cysteine + [E2 ubiquitin-conjugating enzyme]-L-cysteine = [E1 ubiquitin-activating enzyme]-L-cysteine + S-ubiquitinyl-[E2 ubiquitin-conjugating enzyme]-L-cysteine.. Its pathway is protein modification; protein ubiquitination. Functionally, catalyzes the covalent attachment of ubiquitin to other proteins. Plays a role in transcription regulation by catalyzing the monoubiquitination of histone H2B to form H2BK123ub1. H2BK123ub1 gives a specific tag for epigenetic transcriptional activation and is also a prerequisite for H3K4me and H3K79me formation. Also involved in postreplication repair of UV-damaged DNA, in N-end rule-dependent protein degradation and in sporulation. The protein is Ubiquitin-conjugating enzyme E2 2 (UBC2) of Candida albicans (strain SC5314 / ATCC MYA-2876) (Yeast).